Consider the following 1548-residue polypeptide: Nuclear factor of activated T-cells 5 (1548 aa).

The tract at residues 54–106 (QLPPPRETSAASMSQTSGGEAGSPPPAVVAADASSAPSSSMGGACSSFTTSSS) is disordered. Low complexity predominate over residues 81–106 (VVAADASSAPSSSMGGACSSFTTSSS). Ser-137 is subject to Phosphoserine. Lys-139 is subject to N6-acetyllysine. A compositionally biased stretch (polar residues) spans 141–151 (LTGNTVQQHPS). Disordered stretches follow at residues 141–180 (LTGN…QDEG), 192–237 (WMED…CEES), and 258–282 (TTDN…GVKK). Ser-151 is modified (phosphoserine). Position 152 is a phosphothreonine; by CDK5 (Thr-152). Position 172 is a phosphoserine (Ser-172). Residues 196–209 (SPSNFSNMSTSSYN) are compositionally biased toward low complexity. Residues 217–229 (KSRKRNPKQRPGV) show a composition bias toward basic residues. Positions 258–277 (TTDNKGNSKAGNGTLDSQKG) are enriched in polar residues. The RHD domain occupies 281–460 (KKSPMLCGQY…SPILCTQPAG (180 aa)). The DNA-binding element occupies 310 to 317 (RARYLTEG). A Glycyl lysine isopeptide (Lys-Gly) (interchain with G-Cter in SUMO1); alternate cross-link involves residue Lys-572. Lys-572 participates in a covalent cross-link: Glycyl lysine isopeptide (Lys-Gly) (interchain with G-Cter in SUMO2); alternate. Residue Ser-577 is modified to Phosphoserine. Residue Lys-619 forms a Glycyl lysine isopeptide (Lys-Gly) (interchain with G-Cter in SUMO2) linkage. Disordered regions lie at residues 659–682 (GNAS…QQLQ), 750–777 (TEAP…PNSV), 851–892 (PGMF…QQQQ), 970–1010 (SPPA…GAQA), 1097–1127 (LSQE…QLQP), and 1257–1388 (MQSN…QEQQ). 2 stretches are compositionally biased toward low complexity: residues 662–672 (SFSSPSSSHLS) and 751–765 (EAPQ…EQAQ). Polar residues-rich tracts occupy residues 766–777 (IPSNIFPSPNSV), 851–860 (PGMFSSTESA), and 876–886 (VHQQTENTLSS). A compositionally biased stretch (low complexity) spans 979–993 (TSTTTTPQVATPGST). Residues 1113–1127 (VHSQTSTASSEQLQP) are compositionally biased toward polar residues. Positions 1264–1283 (QEQQQQQQQQQQQQQQQQQQ) are enriched in low complexity. Polar residues-rich tracts occupy residues 1284–1300 (SILF…ASQK) and 1308–1333 (FSPN…SNMA). The segment covering 1334–1348 (PMNQEQQPMQFQNQP) has biased composition (low complexity). The segment covering 1349 to 1388 (TVSSLQNPGPTPSESPQTSLFHSSPQIQLVQGSPSSQEQQ) has biased composition (polar residues).

In terms of assembly, homodimer when bound to DNA, completely encircles its DNA target. Interacts with CIDEC; this interaction is direct and retains NFAT5 in the cytoplasm. Does not bind with Fos and Jun transcription factors. Interacts with DDX5 and DDX17; this interaction leads to DDX5/DDX17 recruitment to LNC2 and S100A4 promoters and NFAT5-mediated DDX5/DDX17-enhanced transactivation. In terms of processing, phosphorylated. Phosphorylated at Thr-152 by CDK5 in response to osmotic stress; this phosphorylation mediates its rapid nuclear localization. Post-translationally, poly-ADP-ribosylated by PARP1 in response to DNA damage, promoting recruitment to sites of R-loop-associated DNA damage.

The protein resides in the nucleus. Its subcellular location is the cytoplasm. The protein localises to the chromosome. Its function is as follows. Transcription factor involved, among others, in the transcriptional regulation of osmoprotective and inflammatory genes. Binds the DNA consensus sequence 5'-[ACT][AG]TGGAAA[CAT]A[TA][ATC][CA][ATG][GT][GAC][CG][CT]-3'. Mediates the transcriptional response to hypertonicity. Positively regulates the transcription of LCN2 and S100A4 genes; optimal transactivation of these genes requires the presence of DDX5/DDX17. Also involved in the DNA damage response by preventing formation of R-loops; R-loops are composed of a DNA:RNA hybrid and the associated non-template single-stranded DNA. This chain is Nuclear factor of activated T-cells 5 (Nfat5), found in Rattus norvegicus (Rat).